Here is a 354-residue protein sequence, read N- to C-terminus: Peptide chain release factor 1 (354 aa).

Residue glutamine 230 is modified to N5-methylglutamine.

It belongs to the prokaryotic/mitochondrial release factor family. In terms of processing, methylated by PrmC. Methylation increases the termination efficiency of RF1.

It is found in the cytoplasm. Functionally, peptide chain release factor 1 directs the termination of translation in response to the peptide chain termination codons UAG and UAA. In Leptospira interrogans serogroup Icterohaemorrhagiae serovar copenhageni (strain Fiocruz L1-130), this protein is Peptide chain release factor 1.